A 644-amino-acid polypeptide reads, in one-letter code: DNA mismatch repair protein MutL (644 aa).

Over residues 340 to 360 the composition is skewed to basic and acidic residues; sequence KKEKDESVQEQFKFEHTKPRE. The disordered stretch occupies residues 340-425; it reads KKEKDESVQE…ETVREEKEWT (86 aa). The span at 387–400 shows a compositional bias: low complexity; the sequence is QLWQPPKQEWQPPQ. Residues 416–425 are compositionally biased toward basic and acidic residues; that stretch reads ETVREEKEWT.

Belongs to the DNA mismatch repair MutL/HexB family.

This protein is involved in the repair of mismatches in DNA. It is required for dam-dependent methyl-directed DNA mismatch repair. May act as a 'molecular matchmaker', a protein that promotes the formation of a stable complex between two or more DNA-binding proteins in an ATP-dependent manner without itself being part of a final effector complex. This is DNA mismatch repair protein MutL from Bacillus mycoides (strain KBAB4) (Bacillus weihenstephanensis).